The chain runs to 144 residues: Large ribosomal subunit protein uL15 (144 aa).

Residues 1–57 form a disordered region; it reads MRFNELQPAKGSRFAGKRLGRGIGSGLGKTSGKGHKGQKARSGGYHKVGFEGGQMPL. Over residues 21–31 the composition is skewed to gly residues; that stretch reads RGIGSGLGKTS.

The protein belongs to the universal ribosomal protein uL15 family. Part of the 50S ribosomal subunit.

Functionally, binds to the 23S rRNA. This is Large ribosomal subunit protein uL15 from Dichelobacter nodosus (strain VCS1703A).